The sequence spans 602 residues: Fructan 1-exohydrolase (602 aa).

Residues Met1–Ala19 form the signal peptide. Asp81 is an active-site residue. N-linked (GlcNAc...) asparagine glycans are attached at residues Asn174, Asn242, and Asn254. Cys452 and Cys498 are disulfide-bonded.

It belongs to the glycosyl hydrolase 32 family. Detected in leaves, with maximum levels at the leaf tip.

The catalysed reaction is Hydrolysis of terminal, non-reducing (2-&gt;1)-linked beta-D-fructofuranose residues in fructans.. Its activity is regulated as follows. Inhibited by sucrose. Functionally, hydrolyzes inulin-type beta-(2,1)-fructans. Has low activity against beta-(2,6)-linked fructans. May play a role as a beta-(2,1)-trimmer during graminan biosynthesis. The polypeptide is Fructan 1-exohydrolase (Bromus pictus (Patagonian grass)).